Reading from the N-terminus, the 110-residue chain is Protein mistic (110 aa).

The Cytoplasmic portion of the chain corresponds to 1 to 7; it reads MFCTFFE. A helical transmembrane segment spans residues 8–22; it reads KHHRKWDILLEKSTG. Residues 23–31 are Extracellular-facing; that stretch reads VMEAMKVTS. A helical membrane pass occupies residues 32 to 55; it reads EEKEQLSTAIDRMNEGLDAFIQLY. Topologically, residues 56–66 are cytoplasmic; it reads NESEIDEPLIQ. The chain crosses the membrane as a helical span at residues 67 to 81; the sequence is LDDDTAELMKQARDM. Topologically, residues 82-88 are extracellular; it reads YGQEKLN. Residues 89–102 form a helical membrane-spanning segment; that stretch reads EKLNTIIKQILSIS. Over 103-110 the chain is Cytoplasmic; it reads VSEEGEKE.

Monomer.

It localises to the cell membrane. In terms of biological role, chaperone that facilitates the production and integration of integral membrane proteins into the bacterial lipid bilayer. This Bacillus subtilis (strain 168) protein is Protein mistic (mstX).